We begin with the raw amino-acid sequence, 885 residues long: Alanine--tRNA ligase (885 aa).

A compositionally biased stretch (basic and acidic residues) spans 426 to 444; that stretch reads QEQKTRARQDRREKQRGGA. Residues 426-445 are disordered; that stretch reads QEQKTRARQDRREKQRGGAE. H568, H572, C671, and H675 together coordinate Zn(2+).

The protein belongs to the class-II aminoacyl-tRNA synthetase family. Requires Zn(2+) as cofactor.

The protein resides in the cytoplasm. The catalysed reaction is tRNA(Ala) + L-alanine + ATP = L-alanyl-tRNA(Ala) + AMP + diphosphate. Catalyzes the attachment of alanine to tRNA(Ala) in a two-step reaction: alanine is first activated by ATP to form Ala-AMP and then transferred to the acceptor end of tRNA(Ala). Also edits incorrectly charged Ser-tRNA(Ala) and Gly-tRNA(Ala) via its editing domain. This Chlorobium phaeovibrioides (strain DSM 265 / 1930) (Prosthecochloris vibrioformis (strain DSM 265)) protein is Alanine--tRNA ligase.